The primary structure comprises 450 residues: MSLLQFSGLFVVWLLCTLFIATLTWFEFRRVRFNFNVFFSLLFLLTFFFGFPLTSVLVFRFDVGVAPPEILLQALLSAGCFYAVYYVTYKTRLRKRVADVPRRPLFTMNRVETNLTWVILMGIALVSVGIFFMHNGFLLFRLNSYSQIFSSEVSGVALKRFFYFFIPAMLVVYFLRQDSKAWLFFLVSTVAFGLLTYMIVGGTRANIIIAFAIFLFIGIIRGWISLWMLAAAGVLGIVGMFWLALKRYGMNVSGDEAFYTFLYLTRDTFSPWENLALLLQNYDNIDFQGLAPIVRDFYVFIPSWLWPGRPSMVLNSANYFTWEVLNNHSGLAISPTLIGSLVVMGGALFIPLGAIVVGLIIKWFDWLYELGNRETNRYKAAILHSFCFGAIFNMIVLAREGLDSFVSRVVFFIVVFGACLMIAKLLYWLFESAGLIHKRTKSSLRTQVEG.

11 helical membrane passes run 6–26 (FSGL…LTWF), 37–57 (VFFS…TSVL), 63–83 (VGVA…CFYA), 118–138 (VILM…NGFL), 155–175 (GVAL…VYFL), 181–201 (AWLF…MIVG), 207–227 (IIIA…ISLW), 228–248 (MLAA…LKRY), 341–361 (LVVM…GLII), 378–398 (YKAA…IVLA), and 410–430 (VFFI…YWLF).

It belongs to the WzyE family. In terms of assembly, probably part of a complex composed of WzxE, WzyE and WzzE.

Its subcellular location is the cell inner membrane. It functions in the pathway bacterial outer membrane biogenesis; enterobacterial common antigen biosynthesis. Probably involved in the polymerization of enterobacterial common antigen (ECA) trisaccharide repeat units. This is Probable ECA polymerase from Escherichia coli O139:H28 (strain E24377A / ETEC).